The chain runs to 611 residues: 1,4-alpha-glucan branching enzyme GlgB (611 aa).

The active-site Nucleophile is the Asp302. The Proton donor role is filled by Glu343.

It belongs to the glycosyl hydrolase 13 family. GlgB subfamily. As to quaternary structure, monomer.

It catalyses the reaction Transfers a segment of a (1-&gt;4)-alpha-D-glucan chain to a primary hydroxy group in a similar glucan chain.. It participates in glycan biosynthesis; glycogen biosynthesis. Catalyzes the formation of the alpha-1,6-glucosidic linkages in glycogen by scission of a 1,4-alpha-linked oligosaccharide from growing alpha-1,4-glucan chains and the subsequent attachment of the oligosaccharide to the alpha-1,6 position. The sequence is that of 1,4-alpha-glucan branching enzyme GlgB from Fusobacterium nucleatum subsp. nucleatum (strain ATCC 25586 / DSM 15643 / BCRC 10681 / CIP 101130 / JCM 8532 / KCTC 2640 / LMG 13131 / VPI 4355).